A 95-amino-acid polypeptide reads, in one-letter code: Aspartyl/glutamyl-tRNA(Asn/Gln) amidotransferase subunit C (95 aa).

Belongs to the GatC family. As to quaternary structure, heterotrimer of A, B and C subunits.

The enzyme catalyses L-glutamyl-tRNA(Gln) + L-glutamine + ATP + H2O = L-glutaminyl-tRNA(Gln) + L-glutamate + ADP + phosphate + H(+). It catalyses the reaction L-aspartyl-tRNA(Asn) + L-glutamine + ATP + H2O = L-asparaginyl-tRNA(Asn) + L-glutamate + ADP + phosphate + 2 H(+). Its function is as follows. Allows the formation of correctly charged Asn-tRNA(Asn) or Gln-tRNA(Gln) through the transamidation of misacylated Asp-tRNA(Asn) or Glu-tRNA(Gln) in organisms which lack either or both of asparaginyl-tRNA or glutaminyl-tRNA synthetases. The reaction takes place in the presence of glutamine and ATP through an activated phospho-Asp-tRNA(Asn) or phospho-Glu-tRNA(Gln). The chain is Aspartyl/glutamyl-tRNA(Asn/Gln) amidotransferase subunit C from Chromohalobacter salexigens (strain ATCC BAA-138 / DSM 3043 / CIP 106854 / NCIMB 13768 / 1H11).